The following is a 94-amino-acid chain: Pyrimidine/purine nucleoside phosphorylase (94 aa).

Belongs to the nucleoside phosphorylase PpnP family.

It carries out the reaction a purine D-ribonucleoside + phosphate = a purine nucleobase + alpha-D-ribose 1-phosphate. It catalyses the reaction adenosine + phosphate = alpha-D-ribose 1-phosphate + adenine. The catalysed reaction is cytidine + phosphate = cytosine + alpha-D-ribose 1-phosphate. The enzyme catalyses guanosine + phosphate = alpha-D-ribose 1-phosphate + guanine. It carries out the reaction inosine + phosphate = alpha-D-ribose 1-phosphate + hypoxanthine. It catalyses the reaction thymidine + phosphate = 2-deoxy-alpha-D-ribose 1-phosphate + thymine. The catalysed reaction is uridine + phosphate = alpha-D-ribose 1-phosphate + uracil. The enzyme catalyses xanthosine + phosphate = alpha-D-ribose 1-phosphate + xanthine. Functionally, catalyzes the phosphorolysis of diverse nucleosides, yielding D-ribose 1-phosphate and the respective free bases. Can use uridine, adenosine, guanosine, cytidine, thymidine, inosine and xanthosine as substrates. Also catalyzes the reverse reactions. This chain is Pyrimidine/purine nucleoside phosphorylase, found in Aeromonas hydrophila subsp. hydrophila (strain ATCC 7966 / DSM 30187 / BCRC 13018 / CCUG 14551 / JCM 1027 / KCTC 2358 / NCIMB 9240 / NCTC 8049).